The sequence spans 179 residues: Replication restart protein DnaT (179 aa).

The segment at 156-179 (GGLPKRDVNTVSEPDSQIPPGFRG) is disordered.

It belongs to the DnaT family. Homooligomerizes. Interacts with PriB. Component of the replication restart primosome. Primosome assembly occurs via a 'hand-off' mechanism. PriA binds to replication forks, subsequently PriB then DnaT bind; DnaT then displaces ssDNA to generate the helicase loading substrate.

In terms of biological role, involved in the restart of stalled replication forks, which reloads the replicative helicase on sites other than the origin of replication. Can function in multiple replication restart pathways. Displaces ssDNA from a PriB-ssDNA complex. Probably forms a spiral filament on ssDNA. The polypeptide is Replication restart protein DnaT (Escherichia coli O1:K1 / APEC).